The primary structure comprises 624 residues: Kelch-like ECH-associated protein 1 (624 aa).

Position 38 is an S-(2-succinyl)cysteine (Cys38). Residues 77 to 149 (CDVTLQVKYQ…AYTASISMGE (73 aa)) enclose the BTB domain. Arg135 participates in a covalent cross-link: N5-[4-(S-L-cysteinyl)-5-methyl-1H-imidazol-2-yl]-L-ornithine (Arg-Cys) (interchain with C-151 in KEAP1). Cys151 carries the S-(2,3-dicarboxypropyl)cysteine; alternate modification. Residue Cys151 is modified to S-(2-succinyl)cysteine; alternate. The residue at position 151 (Cys151) is an S-nitrosocysteine; alternate. An N5-[4-(S-L-cysteinyl)-5-methyl-1H-imidazol-2-yl]-L-ornithine (Cys-Arg) (interchain with R-135 in KEAP1) cross-link involves residue Cys151. The BACK domain maps to 184–286 (AIGIANFAEQ…TPNFLQMQLQ (103 aa)). The residue at position 241 (Cys241) is an S-(2-succinyl)cysteine. Cys257 and Cys273 each carry S-(2,3-dicarboxypropyl)cysteine. Cys288 carries the post-translational modification S-(2,3-dicarboxypropyl)cysteine; alternate. At Cys288 the chain carries S-(2-succinyl)cysteine; alternate. S-(2-succinyl)cysteine is present on Cys319. 6 Kelch repeats span residues 327–372 (LIYT…VVGG), 373–423 (LLYA…VIDG), 424–470 (HIYA…VLNR), 471–517 (LLYA…VLHN), 518–564 (CIYA…VHQG), and 565–611 (RIYV…VTME). S-cGMP-cysteine is present on Cys434. S-(2-succinyl)cysteine is present on Cys613.

It belongs to the KEAP1 family. As to quaternary structure, component of the BCR(KEAP1) E3 ubiquitin ligase complex, at least composed of 2 molecules of CUL3, 2 molecules of KEAP1, and RBX1. Interacts with NFE2L2/NRF2; the interaction is direct. Forms a ternary complex with NFE2L2/NRF2 and PGAM5. Interacts with (phosphorylated) SQSTM1/p62; the interaction is direct and inactivates the BCR(KEAP1) complex by sequestering it in inclusion bodies, promoting its degradation. Interacts with NFE2L1. Interacts with BPTF and PTMA. Interacts with MAP1LC3B. Interacts indirectly with ENC1. Interacts with SESN1 and SESN2. Interacts with HSP90AA1 and HSP90AB1. Interacts with PGCKA1; this interaction prevents the ubiquitination of KEAP1 by TRIM25, thus protecting KEAP1 from degradation. (Microbial infection) Interacts with ebolavirus protein VP24; this interaction activates transcription factor NFE2L2/NRF2 by blocking its interaction with KEAP1. Non-enzymatic covalent modifications of reactive cysteines by electrophile metabolites inactivate the BCR(KEAP1) complex. Accumulation of fumarate promotes the formation of cysteine S-succination (S-(2-succinyl)cysteine), leading to inactivate the BCR(KEAP1) complex and promote NFE2L2/NRF2 nuclear accumulation and activation. Nitric oxide-dependent 8-Nitro-cGMP formation promotes cysteine guanylation (S-cGMP-cysteine), leading to NFE2L2/NRF2 nuclear accumulation and activation. Itaconate, an anti-inflammatory metabolite generated in response to lipopolysaccharide, alkylates cysteines, activating NFE2L2/NRF2. Methylglyoxal, a reactive metabolite that accumulates when the glycolytic enzyme PGK1 is inhibited, promotes formation of a methylimidazole cross-link between proximal Cys-151 and Arg-135 on another KEAP1 molecule, resulting in an inactive dimer that inactivates the BCR(KEAP1) complex. Post-translationally, degraded via a proteasomal-independent process during selective autophagy: interaction with phosphorylated SQSTM1/p62 sequesters KEAP1 in inclusion bodies, leading to its degradation. In terms of processing, auto-ubiquitinated by the BCR(KEAP1) complex. Quinone-induced oxidative stress, but not sulforaphane, increases its ubiquitination. Ubiquitination and subsequent degradation is most pronounced following prolonged exposure of cells to oxidative stress, particularly in glutathione-deficient cells that are highly susceptible to oxidative stress. Deubiquitinated by USP25; leading to stabilization. Ubiquitinated by TRIM25; leading to degradation upon ER stress. In terms of tissue distribution, broadly expressed, with highest levels in skeletal muscle.

Its subcellular location is the cytoplasm. It is found in the nucleus. It functions in the pathway protein modification; protein ubiquitination. Ubiquitin ligase activity of the BCR(KEAP1) complex is inhibited by oxidative stress and electrophile metabolites such as sulforaphane. Electrophile metabolites react with reactive cysteine residues in KEAP1 and trigger non-enzymatic covalent modifications of these cysteine residues, leading to inactivate the ubiquitin ligase activity of the BCR(KEAP1) complex. Selective autophagy also inactivates the BCR(KEAP1) complex via interaction between KEAP1 and SQSTM1/p62, which sequesters the complex in inclusion bodies and promotes its degradation. Substrate-specific adapter of a BCR (BTB-CUL3-RBX1) E3 ubiquitin ligase complex that regulates the response to oxidative stress by targeting NFE2L2/NRF2 for ubiquitination. KEAP1 acts as a key sensor of oxidative and electrophilic stress: in normal conditions, the BCR(KEAP1) complex mediates ubiquitination and degradation of NFE2L2/NRF2, a transcription factor regulating expression of many cytoprotective genes. In response to oxidative stress, different electrophile metabolites trigger non-enzymatic covalent modifications of highly reactive cysteine residues in KEAP1, leading to inactivate the ubiquitin ligase activity of the BCR(KEAP1) complex, promoting NFE2L2/NRF2 nuclear accumulation and expression of phase II detoxifying enzymes. In response to selective autophagy, KEAP1 is sequestered in inclusion bodies following its interaction with SQSTM1/p62, leading to inactivation of the BCR(KEAP1) complex and activation of NFE2L2/NRF2. The BCR(KEAP1) complex also mediates ubiquitination of SQSTM1/p62, increasing SQSTM1/p62 sequestering activity and degradation. The BCR(KEAP1) complex also targets BPTF and PGAM5 for ubiquitination and degradation by the proteasome. The polypeptide is Kelch-like ECH-associated protein 1 (Homo sapiens (Human)).